A 112-amino-acid polypeptide reads, in one-letter code: Nucleoid-associated protein CA_C0126 (112 aa).

The segment covering 93-102 has biased composition (basic and acidic residues); sequence EEETSGEMKK. The tract at residues 93-112 is disordered; the sequence is EEETSGEMKKLTGGLNIPGL.

The protein belongs to the YbaB/EbfC family. As to quaternary structure, homodimer.

The protein localises to the cytoplasm. It is found in the nucleoid. Binds to DNA and alters its conformation. May be involved in regulation of gene expression, nucleoid organization and DNA protection. The polypeptide is Nucleoid-associated protein CA_C0126 (Clostridium acetobutylicum (strain ATCC 824 / DSM 792 / JCM 1419 / IAM 19013 / LMG 5710 / NBRC 13948 / NRRL B-527 / VKM B-1787 / 2291 / W)).